The following is a 305-amino-acid chain: UDP-3-O-acyl-N-acetylglucosamine deacetylase (305 aa).

Histidine 78, histidine 235, and aspartate 239 together coordinate Zn(2+). Catalysis depends on histidine 262, which acts as the Proton donor.

It belongs to the LpxC family. Zn(2+) serves as cofactor.

It catalyses the reaction a UDP-3-O-[(3R)-3-hydroxyacyl]-N-acetyl-alpha-D-glucosamine + H2O = a UDP-3-O-[(3R)-3-hydroxyacyl]-alpha-D-glucosamine + acetate. Its pathway is glycolipid biosynthesis; lipid IV(A) biosynthesis; lipid IV(A) from (3R)-3-hydroxytetradecanoyl-[acyl-carrier-protein] and UDP-N-acetyl-alpha-D-glucosamine: step 2/6. Functionally, catalyzes the hydrolysis of UDP-3-O-myristoyl-N-acetylglucosamine to form UDP-3-O-myristoylglucosamine and acetate, the committed step in lipid A biosynthesis. The protein is UDP-3-O-acyl-N-acetylglucosamine deacetylase of Geobacter sp. (strain M21).